The chain runs to 256 residues: 5-keto-4-deoxy-D-glucarate aldolase (256 aa).

The active-site Proton acceptor is H50. Q151 serves as a coordination point for substrate. E153 is a Mg(2+) binding site. Positions 178 and 179 each coordinate substrate. D179 provides a ligand contact to Mg(2+).

Belongs to the HpcH/HpaI aldolase family. KDGluc aldolase subfamily. Homohexamer; trimer of dimers. The cofactor is Mg(2+).

It carries out the reaction 5-dehydro-4-deoxy-D-glucarate = 2-hydroxy-3-oxopropanoate + pyruvate. The enzyme catalyses 2-dehydro-3-deoxy-D-glucarate = 2-hydroxy-3-oxopropanoate + pyruvate. It functions in the pathway carbohydrate acid metabolism; galactarate degradation; D-glycerate from galactarate: step 2/3. In terms of biological role, catalyzes the reversible retro-aldol cleavage of both 5-keto-4-deoxy-D-glucarate and 2-keto-3-deoxy-D-glucarate to pyruvate and tartronic semialdehyde. The polypeptide is 5-keto-4-deoxy-D-glucarate aldolase (Escherichia coli (strain K12 / DH10B)).